A 419-amino-acid chain; its full sequence is UDP-N-acetylglucosamine 1-carboxyvinyltransferase (419 aa).

Position 22–23 (22–23) interacts with phosphoenolpyruvate; it reads KN. Residue arginine 93 coordinates UDP-N-acetyl-alpha-D-glucosamine. Cysteine 117 functions as the Proton donor in the catalytic mechanism. The residue at position 117 (cysteine 117) is a 2-(S-cysteinyl)pyruvic acid O-phosphothioketal. Aspartate 307 and isoleucine 329 together coordinate UDP-N-acetyl-alpha-D-glucosamine.

This sequence belongs to the EPSP synthase family. MurA subfamily.

Its subcellular location is the cytoplasm. The enzyme catalyses phosphoenolpyruvate + UDP-N-acetyl-alpha-D-glucosamine = UDP-N-acetyl-3-O-(1-carboxyvinyl)-alpha-D-glucosamine + phosphate. It participates in cell wall biogenesis; peptidoglycan biosynthesis. In terms of biological role, cell wall formation. Adds enolpyruvyl to UDP-N-acetylglucosamine. The chain is UDP-N-acetylglucosamine 1-carboxyvinyltransferase from Shewanella baltica (strain OS195).